The following is a 479-amino-acid chain: GDP-fucose protein O-fucosyltransferase 3 (479 aa).

Over 1-8 (MVRIQRRK) the chain is Cytoplasmic. Residues 9–31 (LLASCLCVTATVFLLVTLQVMVE) form a helical; Signal-anchor for type II membrane protein membrane-spanning segment. Residues 32–479 (LGKFERKEFK…QEFWGLVFKD (448 aa)) are Lumenal-facing. N-linked (GlcNAc...) asparagine glycans are attached at residues asparagine 110 and asparagine 168. Cysteine 389 and cysteine 392 form a disulfide bridge.

It belongs to the glycosyltransferase 10 family. In terms of tissue distribution, expressed in lung, digestive tract, gall bladder, placenta, kidney, uterus and brain. Not detected in spleen, heart, muscle, liver and pancreas.

The protein resides in the endoplasmic reticulum membrane. It localises to the golgi apparatus membrane. The protein localises to the golgi apparatus. It is found in the lysosome. It carries out the reaction L-threonyl-[protein] + GDP-beta-L-fucose = 3-O-(alpha-L-fucosyl)-L-threonyl-[protein] + GDP + H(+). It catalyses the reaction L-seryl-[protein] + GDP-beta-L-fucose = 3-O-(alpha-L-fucosyl)-L-seryl-[protein] + GDP + H(+). The protein operates within protein modification; protein glycosylation. Its function is as follows. Protein O-fucosyltransferase that specifically catalyzes O-fucosylation of serine or threonine residues in EMI domains of target proteins, such as MMRN1, MMRN2 and EMID1. Attaches fucose through an O-glycosidic linkage. O-fucosylation of EMI domain-containing proteins may be required for facilitating protein folding and secretion. May also show alpha-(1,3)-fucosyltransferase activity toward the innermost N-acetyl glucosamine (GlcNAc) residue in biantennary N-glycan acceptors. However, this was tested with a library of synthetic substrates and this activity is unsure in vivo. May be involved in biosynthesis of Lewis X-carrying biantennary N-glycans that regulate neuron stem cell self-renewal during brain development. The sequence is that of GDP-fucose protein O-fucosyltransferase 3 from Homo sapiens (Human).